The following is a 673-amino-acid chain: UvrABC system protein B (673 aa).

In terms of domain architecture, Helicase ATP-binding spans 26–415 (EGLEDGLAHQ…GDVVDQVVRP (390 aa)). An ATP-binding site is contributed by 39 to 46 (GVTGSGKT). Residues 92–115 (YYDYYQPEAYVPSSDTFIEKDASV) carry the Beta-hairpin motif. Positions 431–597 (QVDDLLSEIR…GLNKKVVDIL (167 aa)) constitute a Helicase C-terminal domain. The segment at 608 to 627 (AKGRGKSRPIVEPDNVPMDM) is disordered. A UVR domain is found at 633–668 (QQKIHELEGLMMQHAQNLEFEEAAQIRDQLHQLREL).

It belongs to the UvrB family. In terms of assembly, forms a heterotetramer with UvrA during the search for lesions. Interacts with UvrC in an incision complex.

It localises to the cytoplasm. The UvrABC repair system catalyzes the recognition and processing of DNA lesions. A damage recognition complex composed of 2 UvrA and 2 UvrB subunits scans DNA for abnormalities. Upon binding of the UvrA(2)B(2) complex to a putative damaged site, the DNA wraps around one UvrB monomer. DNA wrap is dependent on ATP binding by UvrB and probably causes local melting of the DNA helix, facilitating insertion of UvrB beta-hairpin between the DNA strands. Then UvrB probes one DNA strand for the presence of a lesion. If a lesion is found the UvrA subunits dissociate and the UvrB-DNA preincision complex is formed. This complex is subsequently bound by UvrC and the second UvrB is released. If no lesion is found, the DNA wraps around the other UvrB subunit that will check the other stand for damage. This is UvrABC system protein B from Escherichia coli O6:H1 (strain CFT073 / ATCC 700928 / UPEC).